Consider the following 434-residue polypeptide: Mitochondrial distribution and morphology protein 10 (434 aa).

The protein belongs to the MDM10 family. As to quaternary structure, component of the ER-mitochondria encounter structure (ERMES) or MDM complex, composed of mmm1, mdm10, mdm12 and mdm34. Associates with the mitochondrial outer membrane sorting assembly machinery SAM(core) complex.

The protein localises to the mitochondrion outer membrane. In terms of biological role, component of the ERMES/MDM complex, which serves as a molecular tether to connect the endoplasmic reticulum and mitochondria. Components of this complex are involved in the control of mitochondrial shape and protein biogenesis and may function in phospholipid exchange. mdm10 is involved in the late assembly steps of the general translocase of the mitochondrial outer membrane (TOM complex). Functions in the tom40-specific route of the assembly of outer membrane beta-barrel proteins, including the association of tom40 with the receptor tom22 and small TOM proteins. Can associate with the SAM(core) complex as well as the mdm12-mmm1 complex, both involved in late steps of the major beta-barrel assembly pathway, that is responsible for biogenesis of all outer membrane beta-barrel proteins. May act as a switch that shuttles between both complexes and channels precursor proteins into the tom40-specific pathway. Plays a role in mitochondrial morphology and in the inheritance of mitochondria. This Aspergillus niger (strain ATCC MYA-4892 / CBS 513.88 / FGSC A1513) protein is Mitochondrial distribution and morphology protein 10 (mdmB).